We begin with the raw amino-acid sequence, 370 residues long: Peptide chain release factor 1 (370 aa).

The residue at position 231 (Q231) is an N5-methylglutamine. Residues 284–293 (AREERERETR) are compositionally biased toward basic and acidic residues. Positions 284-303 (AREERERETRAAQVGTGERS) are disordered.

The protein belongs to the prokaryotic/mitochondrial release factor family. Post-translationally, methylated by PrmC. Methylation increases the termination efficiency of RF1.

The protein localises to the cytoplasm. Its function is as follows. Peptide chain release factor 1 directs the termination of translation in response to the peptide chain termination codons UAG and UAA. This is Peptide chain release factor 1 from Deinococcus geothermalis (strain DSM 11300 / CIP 105573 / AG-3a).